Reading from the N-terminus, the 118-residue chain is Small ribosomal subunit protein uS13 (118 aa).

Positions R92–K118 are disordered.

Belongs to the universal ribosomal protein uS13 family. In terms of assembly, part of the 30S ribosomal subunit. Forms a loose heterodimer with protein S19. Forms two bridges to the 50S subunit in the 70S ribosome.

Functionally, located at the top of the head of the 30S subunit, it contacts several helices of the 16S rRNA. In the 70S ribosome it contacts the 23S rRNA (bridge B1a) and protein L5 of the 50S subunit (bridge B1b), connecting the 2 subunits; these bridges are implicated in subunit movement. Contacts the tRNAs in the A and P-sites. The sequence is that of Small ribosomal subunit protein uS13 from Acinetobacter baylyi (strain ATCC 33305 / BD413 / ADP1).